We begin with the raw amino-acid sequence, 403 residues long: 4-hydroxy-3-methylbut-2-en-1-yl diphosphate synthase (ferredoxin) (403 aa).

Cys-312, Cys-315, Cys-346, and Glu-353 together coordinate [4Fe-4S] cluster.

It belongs to the IspG family. [4Fe-4S] cluster serves as cofactor.

The catalysed reaction is (2E)-4-hydroxy-3-methylbut-2-enyl diphosphate + 2 oxidized [2Fe-2S]-[ferredoxin] + H2O = 2-C-methyl-D-erythritol 2,4-cyclic diphosphate + 2 reduced [2Fe-2S]-[ferredoxin] + H(+). It participates in isoprenoid biosynthesis; isopentenyl diphosphate biosynthesis via DXP pathway; isopentenyl diphosphate from 1-deoxy-D-xylulose 5-phosphate: step 5/6. Functionally, converts 2C-methyl-D-erythritol 2,4-cyclodiphosphate (ME-2,4cPP) into 1-hydroxy-2-methyl-2-(E)-butenyl 4-diphosphate. In Synechocystis sp. (strain ATCC 27184 / PCC 6803 / Kazusa), this protein is 4-hydroxy-3-methylbut-2-en-1-yl diphosphate synthase (ferredoxin).